The chain runs to 332 residues: RNA polymerase principal sigma factor HrdD (332 aa).

Residues 1–25 are disordered; it reads MATRAVARRQSATGETADSASSVRA. Residues 10-22 show a composition bias toward polar residues; sequence QSATGETADSASS. The short motif at 124-137 is the Polymerase core binding element; sequence DLIQEGNAGLVRAV. Positions 294-313 form a DNA-binding region, H-T-H motif; sequence LTEVGKEHGLTRERIRQIEK.

Belongs to the sigma-70 factor family.

Its function is as follows. Sigma factors are initiation factors that promote the attachment of RNA polymerase to specific initiation sites and are then released. In Streptomyces viridifaciens, this protein is RNA polymerase principal sigma factor HrdD (hrdD).